We begin with the raw amino-acid sequence, 324 residues long: MKATAKAHPIQGLVKYHGMRDTERRMPYHDSISVCTAPSHTQTTVEFRPDADEDVYVIGGEEVEGRGAERIQAVVDRVRELAGFDHRVRLESENSFPSNIGFGSSASGFAAAAMALAEAADLDMTRPEVSTIARRGSASAARAVTGAFSHLYSGMNDTDCRSERIETDLEDDLRIVAAHVPAYKETEQAHAEAADSHMFQARMAHIHAQIDDMRDALYDGDFDAAFELAEHDSLSLAATTMTGPAGWVYWQPRTIAVFNAVRKLRNEEDVPVYFSTDTGASVYINTTEEHVDRVEEAVADCGVETDVWGVGGPAEVLDESEALF.

The protein belongs to the phosphomevalonate decarboxylase family.

It carries out the reaction (R)-5-phosphomevalonate + ATP = isopentenyl phosphate + ADP + phosphate + CO2. With respect to regulation, is strongly inhibited by 6-fluoromevalonate monophosphate but shows negligible inhibition by 6-fluoromevalonate diphosphate (a potent inhibitor of the classical mevalonate pathway). In terms of biological role, catalyzes the decarboxylation of mevalonate 5-phosphate (MVAP) to isopentenyl phosphate (IP). Functions in an alternate mevalonate (MVA) pathway leading to isopentenyl diphosphate (IPP), a key precursor for the biosynthesis of isoprenoid compounds such as archaeal membrane lipids. The protein is Phosphomevalonate decarboxylase (mvaD) of Haloferax volcanii (strain ATCC 29605 / DSM 3757 / JCM 8879 / NBRC 14742 / NCIMB 2012 / VKM B-1768 / DS2) (Halobacterium volcanii).